The sequence spans 99 residues: MLEQQRNSADALTVSVLNAQSQVTSKPLRDSVKQALRNYLAQLDGQDVNDLYELVLAEVEHPMLDMIMQYTRGNQTRAANMLGINRGTLRKKLKKYGMG.

Positions 75–94 form a DNA-binding region, H-T-H motif; the sequence is QTRAANMLGINRGTLRKKLK.

The protein belongs to the transcriptional regulatory Fis family. In terms of assembly, homodimer.

Activates ribosomal RNA transcription. Plays a direct role in upstream activation of rRNA promoters. This chain is DNA-binding protein Fis, found in Haemophilus influenzae (strain PittEE).